The chain runs to 45 residues: Large ribosomal subunit protein bL36 (45 aa).

The interval Met-1–Lys-45 is disordered.

It belongs to the bacterial ribosomal protein bL36 family.

In Chlamydia caviae (strain ATCC VR-813 / DSM 19441 / 03DC25 / GPIC) (Chlamydophila caviae), this protein is Large ribosomal subunit protein bL36.